Reading from the N-terminus, the 423-residue chain is Serine hydroxymethyltransferase (423 aa).

Residues L118 and 122–124 each bind (6S)-5,6,7,8-tetrahydrofolate; that span reads GHL. K227 carries the N6-(pyridoxal phosphate)lysine modification. 351–353 is a binding site for (6S)-5,6,7,8-tetrahydrofolate; the sequence is SPF.

This sequence belongs to the SHMT family. As to quaternary structure, homodimer. It depends on pyridoxal 5'-phosphate as a cofactor.

The protein resides in the cytoplasm. It catalyses the reaction (6R)-5,10-methylene-5,6,7,8-tetrahydrofolate + glycine + H2O = (6S)-5,6,7,8-tetrahydrofolate + L-serine. It functions in the pathway one-carbon metabolism; tetrahydrofolate interconversion. It participates in amino-acid biosynthesis; glycine biosynthesis; glycine from L-serine: step 1/1. In terms of biological role, catalyzes the reversible interconversion of serine and glycine with tetrahydrofolate (THF) serving as the one-carbon carrier. This reaction serves as the major source of one-carbon groups required for the biosynthesis of purines, thymidylate, methionine, and other important biomolecules. Also exhibits THF-independent aldolase activity toward beta-hydroxyamino acids, producing glycine and aldehydes, via a retro-aldol mechanism. In Petrotoga mobilis (strain DSM 10674 / SJ95), this protein is Serine hydroxymethyltransferase.